The sequence spans 458 residues: tRNA modification GTPase MnmE (458 aa).

(6S)-5-formyl-5,6,7,8-tetrahydrofolate is bound by residues Arg26, Glu88, and Arg127. The TrmE-type G domain maps to 224–378; sequence GLSTAIIGRP…IEDRINQLFF (155 aa). Residue Asn234 participates in K(+) binding. Residues 234-239, 253-259, and 278-281 each bind GTP; these read NVGKSS, TDIAGTT, and DTAG. A Mg(2+)-binding site is contributed by Ser238. K(+) contacts are provided by Thr253, Ile255, and Thr258. Residue Thr259 participates in Mg(2+) binding. Position 458 (Lys458) interacts with (6S)-5-formyl-5,6,7,8-tetrahydrofolate.

This sequence belongs to the TRAFAC class TrmE-Era-EngA-EngB-Septin-like GTPase superfamily. TrmE GTPase family. Homodimer. Heterotetramer of two MnmE and two MnmG subunits. K(+) is required as a cofactor.

It is found in the cytoplasm. Its function is as follows. Exhibits a very high intrinsic GTPase hydrolysis rate. Involved in the addition of a carboxymethylaminomethyl (cmnm) group at the wobble position (U34) of certain tRNAs, forming tRNA-cmnm(5)s(2)U34. In Streptococcus pyogenes serotype M28 (strain MGAS6180), this protein is tRNA modification GTPase MnmE.